The chain runs to 114 residues: Late cornified envelope protein 1D (114 aa).

Over residues 1–10 the composition is skewed to low complexity; the sequence is MSCQQSQQQC. Disordered regions lie at residues 1–21 and 75–114; these read MSCQ…PKCT and HHRR…GGCC. Basic residues predominate over residues 75–86; that stretch reads HHRRHRSHRRRP. A compositionally biased stretch (low complexity) spans 88 to 99; it reads SSDCCSQPSGGS.

This sequence belongs to the LCE family. In terms of assembly, interacts with CYSRT1. As to expression, skin-specific. Expression was readily detected in adult trunk skin, adult arm skin, fetal skin, penal skin, vulva, esophagus and tongue. Not expressed in the cervix, rectum, lung, colon, or placenta.

In terms of biological role, precursors of the cornified envelope of the stratum corneum. The protein is Late cornified envelope protein 1D (LCE1D) of Homo sapiens (Human).